Reading from the N-terminus, the 449-residue chain is Deoxyguanosinetriphosphate triphosphohydrolase-like protein (449 aa).

Positions 1–27 (MTSSVWQERRHGEDKQRRNDHRSPYQR) are disordered. The segment covering 7 to 27 (QERRHGEDKQRRNDHRSPYQR) has biased composition (basic and acidic residues). The HD domain maps to 59–255 (RLTHSLEVSQ…MELADDIAYA (197 aa)).

The protein belongs to the dGTPase family. Type 2 subfamily.

The polypeptide is Deoxyguanosinetriphosphate triphosphohydrolase-like protein (Shewanella baltica (strain OS185)).